The primary structure comprises 391 residues: Phosphoglycerate kinase (391 aa).

Residues 21 to 23 (DLN), Arg36, 59 to 62 (HLGR), Arg113, and Arg146 each bind substrate. ATP-binding positions include Lys197, Glu319, and 345 to 348 (GGDT).

This sequence belongs to the phosphoglycerate kinase family. In terms of assembly, monomer.

Its subcellular location is the cytoplasm. The enzyme catalyses (2R)-3-phosphoglycerate + ATP = (2R)-3-phospho-glyceroyl phosphate + ADP. It functions in the pathway carbohydrate degradation; glycolysis; pyruvate from D-glyceraldehyde 3-phosphate: step 2/5. In Shewanella baltica (strain OS195), this protein is Phosphoglycerate kinase.